Here is a 113-residue protein sequence, read N- to C-terminus: Putative pterin-4-alpha-carbinolamine dehydratase (113 aa).

Belongs to the pterin-4-alpha-carbinolamine dehydratase family.

The catalysed reaction is (4aS,6R)-4a-hydroxy-L-erythro-5,6,7,8-tetrahydrobiopterin = (6R)-L-erythro-6,7-dihydrobiopterin + H2O. The sequence is that of Putative pterin-4-alpha-carbinolamine dehydratase from Legionella pneumophila (strain Paris).